A 200-amino-acid chain; its full sequence is GTP-dependent dephospho-CoA kinase (200 aa).

Residues Asp56, Val57, Val58, Asp75, and Glu132 each contribute to the GTP site.

It belongs to the GTP-dependent DPCK family.

The enzyme catalyses 3'-dephospho-CoA + GTP = GDP + CoA + H(+). Its pathway is cofactor biosynthesis; coenzyme A biosynthesis. In terms of biological role, catalyzes the GTP-dependent phosphorylation of the 3'-hydroxyl group of dephosphocoenzyme A to form coenzyme A (CoA). This Caldivirga maquilingensis (strain ATCC 700844 / DSM 13496 / JCM 10307 / IC-167) protein is GTP-dependent dephospho-CoA kinase.